Consider the following 125-residue polypeptide: Holo-[acyl-carrier-protein] synthase (125 aa).

2 residues coordinate Mg(2+): Asp-8 and Glu-57.

The protein belongs to the P-Pant transferase superfamily. AcpS family. Mg(2+) serves as cofactor.

Its subcellular location is the cytoplasm. It catalyses the reaction apo-[ACP] + CoA = holo-[ACP] + adenosine 3',5'-bisphosphate + H(+). In terms of biological role, transfers the 4'-phosphopantetheine moiety from coenzyme A to a Ser of acyl-carrier-protein. This is Holo-[acyl-carrier-protein] synthase from Koribacter versatilis (strain Ellin345).